Reading from the N-terminus, the 367-residue chain is Lipoyl synthase 2, chloroplastic (367 aa).

7 residues coordinate [4Fe-4S] cluster: C84, C89, C95, C121, C125, C128, and S336. Positions 104–325 (GEGDGIATAT…KEYGESVGFR (222 aa)) constitute a Radical SAM core domain.

It belongs to the radical SAM superfamily. Lipoyl synthase family. The cofactor is [4Fe-4S] cluster.

It is found in the plastid. Its subcellular location is the chloroplast. It carries out the reaction [[Fe-S] cluster scaffold protein carrying a second [4Fe-4S](2+) cluster] + N(6)-octanoyl-L-lysyl-[protein] + 2 oxidized [2Fe-2S]-[ferredoxin] + 2 S-adenosyl-L-methionine + 4 H(+) = [[Fe-S] cluster scaffold protein] + N(6)-[(R)-dihydrolipoyl]-L-lysyl-[protein] + 4 Fe(3+) + 2 hydrogen sulfide + 2 5'-deoxyadenosine + 2 L-methionine + 2 reduced [2Fe-2S]-[ferredoxin]. It functions in the pathway protein modification; protein lipoylation via endogenous pathway; protein N(6)-(lipoyl)lysine from octanoyl-[acyl-carrier-protein]: step 2/2. Functionally, catalyzes the radical-mediated insertion of two sulfur atoms into the C-6 and C-8 positions of the octanoyl moiety bound to the lipoyl domains of lipoate-dependent enzymes, thereby converting the octanoylated domains into lipoylated derivatives. The sequence is that of Lipoyl synthase 2, chloroplastic from Zea mays (Maize).